A 358-amino-acid polypeptide reads, in one-letter code: DNA polymerase IV (358 aa).

A UmuC domain is found at 4–185 (IIHIDMDCYF…LSLRKIPGVG (182 aa)). Residues aspartate 8 and aspartate 103 each coordinate Mg(2+). Glutamate 104 is a catalytic residue.

It belongs to the DNA polymerase type-Y family. Monomer. It depends on Mg(2+) as a cofactor.

Its subcellular location is the cytoplasm. It carries out the reaction DNA(n) + a 2'-deoxyribonucleoside 5'-triphosphate = DNA(n+1) + diphosphate. Its function is as follows. Poorly processive, error-prone DNA polymerase involved in untargeted mutagenesis. Copies undamaged DNA at stalled replication forks, which arise in vivo from mismatched or misaligned primer ends. These misaligned primers can be extended by PolIV. Exhibits no 3'-5' exonuclease (proofreading) activity. May be involved in translesional synthesis, in conjunction with the beta clamp from PolIII. In Shewanella sp. (strain W3-18-1), this protein is DNA polymerase IV.